Reading from the N-terminus, the 438-residue chain is Aspartic proteinase nepenthesin-2 (438 aa).

The first 24 residues, 1-24 (MASPLYSVVLGLAIVSAIVAPTSS), serve as a signal peptide directing secretion. A propeptide spans 25–79 (TSRGTLLHHGQKRPQPGLRVDLEQVDSGKNLTKYELIKRAIKRGERRMRSINAML) (activation peptide). A glycan (N-linked (GlcNAc...) asparagine) is linked at Asn-54. Residues 96 to 431 (YLMNVAIGTP…DLQNLAVSFV (336 aa)) form the Peptidase A1 domain. Asp-114 is an active-site residue. 6 disulfides stabilise this stretch: Cys-124–Cys-127, Cys-130–Cys-204, Cys-151–Cys-169, Cys-156–Cys-164, Cys-241–Cys-435, and Cys-354–Cys-395. Asp-315 is a catalytic residue.

It belongs to the peptidase A1 family.

It localises to the secreted. The catalysed reaction is Similar to pepsin, but also cleaves on either side of Asp and at Lys-|-Arg.. Its activity is regulated as follows. Inhibited by pepstatin and by diazoacetyl-D,L-norleucine methyl ester (DAN) in the presence of Cu(2+) ions. Its function is as follows. Extracellular proteinase found in the pitcher fluid of carnivorous plants. Digest prey for nitrogen uptake. The protein is Aspartic proteinase nepenthesin-2 (nep2) of Nepenthes gracilis (Slender pitcher plant).